We begin with the raw amino-acid sequence, 1198 residues long: Structural polyprotein (1198 aa).

Residues 2-15 form an interaction with host EXOC1 region; sequence TKKPGGPGKNRAIN. Positions 37 to 72 are hydrophobic; homodimerization of capsid protein C; it reads LLDGRGPVRFVLALITFFKFTALAPTKALLGRWKAV. A propeptide spans 106–127 (ER anchor for the capsid protein C, removed in mature form by serine protease NS3); the sequence is GGNEGSIMWLASLAVVIACAGA. A helical membrane pass occupies residues 110–130; the sequence is GSIMWLASLAVVIACAGAMKL. Asparagine 142 carries N-linked (GlcNAc...) asparagine; by host glycosylation. A run of 2 helical transmembrane segments spans residues 254 to 274 and 280 to 294; these read WIIR…MLGS and VVFT…PAYS. 6 disulfide bridges follow: cysteine 297–cysteine 324, cysteine 354–cysteine 410, cysteine 354–cysteine 415, cysteine 368–cysteine 399, cysteine 386–cysteine 410, and cysteine 386–cysteine 415. Positions 392-405 are fusion peptide; it reads DRGWGNGCGLFGKG. The N-linked (GlcNAc...) asparagine; by host glycan is linked to asparagine 448. 2 disulfides stabilise this stretch: cysteine 484/cysteine 581 and cysteine 598/cysteine 629. The next 2 helical transmembrane spans lie at 747–767 and 774–794; these read FGGM…WMGV and IALA…NVHA. 6 cysteine pairs are disulfide-bonded: cysteine 798–cysteine 809, cysteine 849–cysteine 937, cysteine 973–cysteine 1017, cysteine 1074–cysteine 1123, cysteine 1085–cysteine 1106, and cysteine 1107–cysteine 1110. 2 N-linked (GlcNAc...) asparagine; by host glycosylation sites follow: asparagine 924 and asparagine 1001. The interval 1151 to 1177 is disordered; the sequence is MVDPFSAGPSGDVSGHPGSPSQEVDGQ.

Homodimer. Interacts (via N-terminus) with host EXOC1 (via C-terminus); this interaction results in EXOC1 degradation through the proteasome degradation pathway. Interacts with host CAPRIN1; this interaction is involved in the suppression of the integrated stress response. As to quaternary structure, forms heterodimers with envelope protein E in the endoplasmic reticulum and Golgi. In terms of assembly, homodimer; in the endoplasmic reticulum and Golgi. Interacts with protein prM. Interacts with non-structural protein 1. Post-translationally, genome polyprotein: Specific enzymatic cleavages in vivo yield mature proteins. Cleavages in the lumen of endoplasmic reticulum are performed by host signal peptidase, whereas cleavages in the cytoplasmic side are performed by serine protease NS3. Signal cleavage at the 2K-4B site requires a prior NS3 protease-mediated cleavage at the 4A-2K site. Cleaved in post-Golgi vesicles by a host furin, releasing the mature small envelope protein M, and peptide pr. This cleavage is incomplete as up to 30% of viral particles still carry uncleaved prM. In terms of processing, N-glycosylated.

The protein resides in the secreted. The protein localises to the virion membrane. Its subcellular location is the host endoplasmic reticulum membrane. In terms of biological role, plays a role in virus budding by binding to the cell membrane and gathering the viral RNA into a nucleocapsid that forms the core of a mature virus particle. During virus entry, may induce genome penetration into the host cytoplasm after hemifusion induced by the surface proteins. Can migrate to the cell nucleus where it modulates host functions. Overcomes the anti-viral effects of host EXOC1 by sequestering and degrading the latter through the proteasome degradation pathway. Inhibits the integrated stress response (ISR) in the infected cell by binding to host CAPRIN1. Inhibits RNA silencing by interfering with host Dicer. Its function is as follows. Prevents premature fusion activity of envelope proteins in trans-Golgi by binding to envelope protein E at pH6.0. After virion release in extracellular space, gets dissociated from E dimers. Functionally, acts as a chaperone for envelope protein E during intracellular virion assembly by masking and inactivating envelope protein E fusion peptide. prM is the only viral peptide matured by host furin in the trans-Golgi network probably to avoid catastrophic activation of the viral fusion activity in acidic Golgi compartment prior to virion release. prM-E cleavage is inefficient, and many virions are only partially matured. These uncleaved prM would play a role in immune evasion. In terms of biological role, may play a role in virus budding. Exerts cytotoxic effects by activating a mitochondrial apoptotic pathway through M ectodomain. May display a viroporin activity. Binds to host cell surface receptor and mediates fusion between viral and cellular membranes. Envelope protein is synthesized in the endoplasmic reticulum in the form of heterodimer with protein prM. They play a role in virion budding in the ER, and the newly formed immature particle is covered with 60 spikes composed of heterodimer between precursor prM and envelope protein E. The virion is transported to the Golgi apparatus where the low pH causes dissociation of PrM-E heterodimers and formation of E homodimers. prM-E cleavage is inefficient, and many virions are only partially matured. These uncleaved prM would play a role in immune evasion. Its function is as follows. May play a role in neuroinvasiveness. The protein is Structural polyprotein of Ardeidae (herons).